The sequence spans 258 residues: Imidazole glycerol phosphate synthase subunit HisF (258 aa).

Active-site residues include Asp-11 and Asp-130.

Belongs to the HisA/HisF family. Heterodimer of HisH and HisF.

It is found in the cytoplasm. The catalysed reaction is 5-[(5-phospho-1-deoxy-D-ribulos-1-ylimino)methylamino]-1-(5-phospho-beta-D-ribosyl)imidazole-4-carboxamide + L-glutamine = D-erythro-1-(imidazol-4-yl)glycerol 3-phosphate + 5-amino-1-(5-phospho-beta-D-ribosyl)imidazole-4-carboxamide + L-glutamate + H(+). Its pathway is amino-acid biosynthesis; L-histidine biosynthesis; L-histidine from 5-phospho-alpha-D-ribose 1-diphosphate: step 5/9. Its function is as follows. IGPS catalyzes the conversion of PRFAR and glutamine to IGP, AICAR and glutamate. The HisF subunit catalyzes the cyclization activity that produces IGP and AICAR from PRFAR using the ammonia provided by the HisH subunit. In Buchnera aphidicola subsp. Baizongia pistaciae (strain Bp), this protein is Imidazole glycerol phosphate synthase subunit HisF.